Here is a 196-residue protein sequence, read N- to C-terminus: Charged multivesicular body protein 1a (196 aa).

Residue Met1 is modified to N-acetylmethionine. The stretch at 5–42 (LFQLKFTAKQLEKLAKKAEKDSKAEQAKVKKALQQKNV) forms a coiled coil. Ser101 is subject to Phosphoserine. Positions 102–124 (AMDLQKVSAVMDRFEQQVQNLDV) form a coiled coil. Ser173 carries the phosphoserine modification. The MIT-interacting motif signature appears at 185–195 (DQLSRRLAALR).

This sequence belongs to the SNF7 family. As to quaternary structure, probable peripherally associated component of the endosomal sorting required for transport complex III (ESCRT-III). ESCRT-III components are thought to multimerize to form a flat lattice on the perimeter membrane of the endosome. Several assembly forms of ESCRT-III may exist that interact and act sequentially. Self-associates. Interacts with CHMP1B. Interacts with VPS4A. Interacts with VPS4B. Interacts with PHF1. Interacts with IST1. Interacts with MITD1. In terms of tissue distribution, highly expressed in adult heart, kidney and liver. Expressed at lower levels in adult colon, spleen, lung, brain, testis and muscle. Also expressed in myoblasts and embryo fibroblasts.

It localises to the cytoplasm. It is found in the endosome membrane. Its subcellular location is the nucleus matrix. Probable peripherally associated component of the endosomal sorting required for transport complex III (ESCRT-III) which is involved in multivesicular bodies (MVBs) formation and sorting of endosomal cargo proteins into MVBs. MVBs contain intraluminal vesicles (ILVs) that are generated by invagination and scission from the limiting membrane of the endosome and mostly are delivered to lysosomes enabling degradation of membrane proteins, such as stimulated growth factor receptors, lysosomal enzymes and lipids. The MVB pathway appears to require the sequential function of ESCRT-O, -I,-II and -III complexes. ESCRT-III proteins mostly dissociate from the invaginating membrane before the ILV is released. The ESCRT machinery also functions in topologically equivalent membrane fission events, such as the terminal stages of cytokinesis. ESCRT-III proteins are believed to mediate the necessary vesicle extrusion and/or membrane fission activities, possibly in conjunction with the AAA ATPase VPS4. Involved in cytokinesis. Involved in recruiting VPS4A and/or VPS4B to the midbody of dividing cells. May also be involved in chromosome condensation. Targets the Polycomb group (PcG) protein BMI1/PCGF4 to regions of condensed chromatin. May play a role in stable cell cycle progression and in PcG gene silencing. The protein is Charged multivesicular body protein 1a (Chmp1a) of Mus musculus (Mouse).